The sequence spans 185 residues: CASP-like protein 5A1 (185 aa).

The Cytoplasmic segment spans residues 1–48 (MNVSHPAVHPVGVPPALGGQAVPPRMRMRVRMEYLVFQGMPLPGSLGG). The helical transmembrane segment at 49–69 (LMLRLGQFCSALIAFSVMVSI) threads the bilayer. Over 70–76 (RDFSVTA) the chain is Extracellular. Residues 77–97 (FCYLLAATVLQCLWSLALAVI) traverse the membrane as a helical segment. Topologically, residues 98-121 (DVYALLVKRSLRNPLLVSIFVVGD) are cytoplasmic. Residues 122 to 142 (GVTATLTFAAACASAGVVVLI) form a helical membrane-spanning segment. At 143 to 160 (GNDISMCKSNPCANYEAA) the chain is on the extracellular side. The helical transmembrane segment at 161–181 (IIMAFLSWFMVSISFVLTFWM) threads the bilayer. Residues 182–185 (LATL) are Cytoplasmic-facing.

It belongs to the Casparian strip membrane proteins (CASP) family. As to quaternary structure, homodimer and heterodimers.

The protein localises to the cell membrane. In Pinus contorta (Shore pine), this protein is CASP-like protein 5A1.